We begin with the raw amino-acid sequence, 444 residues long: Glutamyl-tRNA reductase (444 aa).

Substrate contacts are provided by residues 49–52, serine 117, 122–124, and glutamine 128; these read TCNR and EPQ. Cysteine 50 functions as the Nucleophile in the catalytic mechanism. 202–207 contributes to the NADP(+) binding site; sequence GAGETI.

Belongs to the glutamyl-tRNA reductase family. Homodimer.

The catalysed reaction is (S)-4-amino-5-oxopentanoate + tRNA(Glu) + NADP(+) = L-glutamyl-tRNA(Glu) + NADPH + H(+). The protein operates within porphyrin-containing compound metabolism; protoporphyrin-IX biosynthesis; 5-aminolevulinate from L-glutamyl-tRNA(Glu): step 1/2. Functionally, catalyzes the NADPH-dependent reduction of glutamyl-tRNA(Glu) to glutamate 1-semialdehyde (GSA). This is Glutamyl-tRNA reductase from Mannheimia succiniciproducens (strain KCTC 0769BP / MBEL55E).